The primary structure comprises 326 residues: MALSGSTPAPCWEEDECLDYYGMLSLHRMFEVVGGQLTECELELLAFLLDEAPGAAGGLARARSGLELLLELERRGQCDESNLRLLGQLLRVLARHDLLPHLARKRRRPVSPERYSYGTSSSSKRTEGSCRRRRQSSSSANSQQGQWETGSPPTKRQRRSRGRPSGGARRRRRGAPAAPQQQSEPARPSSEGKVTCDIRLRVRAEYCEHGPALEQGVASRRPQALARQLDVFGQATAVLRSRDLGSVVCDIKFSELSYLDAFWGDYLSGALLQALRGVFLTEALREAVGREAVRLLVSVDEADYEAGRRRLLLMEEEGGRRPTEAS.

The 80-residue stretch at 25-104 folds into the DED domain; the sequence is SLHRMFEVVG…RHDLLPHLAR (80 aa). The short motif at 104 to 109 is the Nuclear localization signal element; it reads RKRRRP. Residues 104–194 form a disordered region; the sequence is RKRRRPVSPE…PARPSSEGKV (91 aa). Residues 136-146 show a composition bias toward low complexity; that stretch reads SSSSANSQQGQ. The short motif at 155–173 is the Bipartite nuclear localization signal element; the sequence is KRQRRSRGRPSGGARRRRR. Basic residues predominate over residues 155–174; that stretch reads KRQRRSRGRPSGGARRRRRG. Residues 175–191 show a composition bias toward low complexity; sequence APAAPQQQSEPARPSSE.

As to quaternary structure, interacts with CASP8, CASP10 and GTF3C3. Homodimerizes and heterodimerizes with DEDD. As to expression, expressed in most tissues. High levels were found in liver, kidney, heart, ovary, spleen, testes, skeletal muscle and peripheral blood leukocytes. Expression was absent or low in colon and small intestine. Expression is relatively high in the tumor cell lines chronic myologenous leukemia K-562 and the colorectal adenocarcinoma SW480. Expression is moderate in the cervical carcinoma HeLa, the Burkitt's lymphoma Raji, the lung carcinoma A-549, and the melanoma G-361. In contrast, two leukemia cell lines, HL-60 (promyelocytic leukemia) and MOLT-4 (lymphoblastic leukemia), show relatively low levels.

The protein resides in the nucleus. Its subcellular location is the nucleolus. In terms of biological role, may play a critical role in death receptor-induced apoptosis and may target CASP8 and CASP10 to the nucleus. May regulate degradation of intermediate filaments during apoptosis. May play a role in the general transcription machinery in the nucleus and might be an important regulator of the activity of GTF3C3. The protein is DNA-binding death effector domain-containing protein 2 (DEDD2) of Homo sapiens (Human).